The sequence spans 162 residues: Protein mmf1, mitochondrial (162 aa).

Belongs to the RutC family.

It localises to the mitochondrion. Its subcellular location is the cytoplasm. Its function is as follows. Plays a role in the maintenance of mitochondrial DNA. This chain is Protein mmf1, mitochondrial (mmf1), found in Schizosaccharomyces pombe (strain 972 / ATCC 24843) (Fission yeast).